Reading from the N-terminus, the 122-residue chain is Flagellar protein FliT (122 aa).

The interval 1–50 (MTSTVEFINRWQRIALLSQSLLELAQRGEWDLLLQQEVSYLQSIETVMEK) is required for homodimerization. The tract at residues 60–98 (IQDMVAGYIKQTLDNEQLLKGLLQQRLDELSSLIGQSTR) is fliD binding.

The protein belongs to the FliT family. In terms of assembly, homodimer. Interacts with FliD and FlhC.

The protein resides in the cytoplasm. Its subcellular location is the cytosol. Its function is as follows. Dual-function protein that regulates the transcription of class 2 flagellar operons and that also acts as an export chaperone for the filament-capping protein FliD. As a transcriptional regulator, acts as an anti-FlhDC factor; it directly binds FlhC, thus inhibiting the binding of the FlhC/FlhD complex to class 2 promoters, resulting in decreased expression of class 2 flagellar operons. As a chaperone, effects FliD transition to the membrane by preventing its premature polymerization, and by directing it to the export apparatus. This chain is Flagellar protein FliT, found in Salmonella gallinarum (strain 287/91 / NCTC 13346).